A 283-amino-acid chain; its full sequence is Probable endonuclease 4 (283 aa).

Positions 69, 109, 145, 179, 182, 216, 229, 231, and 261 each coordinate Zn(2+).

The protein belongs to the AP endonuclease 2 family. It depends on Zn(2+) as a cofactor.

It carries out the reaction Endonucleolytic cleavage to 5'-phosphooligonucleotide end-products.. In terms of biological role, endonuclease IV plays a role in DNA repair. It cleaves phosphodiester bonds at apurinic or apyrimidinic (AP) sites, generating a 3'-hydroxyl group and a 5'-terminal sugar phosphate. In Prosthecochloris aestuarii (strain DSM 271 / SK 413), this protein is Probable endonuclease 4.